The primary structure comprises 276 residues: Large ribosomal subunit protein uL2cy (276 aa).

Disordered stretches follow at residues Met-1–Asn-25 and Met-225–Lys-276. A compositionally biased stretch (polar residues) spans Lys-7–Asn-25.

This sequence belongs to the universal ribosomal protein uL2 family. In terms of assembly, part of the 50S ribosomal subunit.

The protein localises to the plastid. It is found in the chloroplast. The sequence is that of Large ribosomal subunit protein uL2cy (rpl2-B) from Coffea arabica (Arabian coffee).